The primary structure comprises 146 residues: Hemoglobin subunit beta (146 aa).

Val-1 carries the post-translational modification N-acetylvaline. In terms of domain architecture, Globin spans 2-146; sequence HLTPEEKTAV…VANALAHKYH (145 aa). Residue Thr-12 is modified to Phosphothreonine. Phosphoserine is present on Ser-44. At Lys-59 the chain carries N6-acetyllysine. His-63 is a binding site for heme b. Residue Lys-82 is modified to N6-acetyllysine. His-92 is a binding site for heme b. An S-nitrosocysteine modification is found at Cys-93. At Lys-144 the chain carries N6-acetyllysine.

The protein belongs to the globin family. In terms of assembly, heterotetramer of two alpha chains and two beta chains. Red blood cells.

Its function is as follows. Involved in oxygen transport from the lung to the various peripheral tissues. In Chlorocebus aethiops (Green monkey), this protein is Hemoglobin subunit beta (HBB).